The chain runs to 383 residues: Seipin (383 aa).

Residues 1-27 (MVNDPPVPALLWAQEVGHVLAGRARRL) lie on the Cytoplasmic side of the membrane. The helical transmembrane segment at 28–48 (MLQFGVLFCTILLLLWVSVFL) threads the bilayer. Residues 49–242 (YGSFYYSYMP…TCAFVGVASN (194 aa)) lie on the Lumenal side of the membrane. N88 and N242 each carry an N-linked (GlcNAc...) asparagine glycan. A helical membrane pass occupies residues 243 to 263 (FTFLSVIVLFSYMQWVWGAVW). Residues 264-383 (PRHRFSLQVN…LRQRPTCSSS (120 aa)) are Cytoplasmic-facing. A disordered region spans residues 279–383 (NSHHGAPRRI…LRQRPTCSSS (105 aa)). S289 is subject to Phosphoserine. A compositionally biased stretch (polar residues) spans 292–302 (QPGQESTQQSD). The span at 322–332 (EEEKPEKRPLN) shows a compositional bias: basic and acidic residues. Residues S342 and S345 each carry the phosphoserine modification. Low complexity predominate over residues 353–371 (TEANPPTSASASALAPETL).

The protein belongs to the seipin family. In terms of assembly, undecamer (an oligomer having eleven subunits). Oligomerization is important for its function in lipid droplet formation. Interacts with LDAF1 to form an oligomeric complex. Interacts with RAB18. Interacts with ZFYVE1 in a RAB18-dependent manner. Expressed in the paraventricular nucleus of the hypothalamus (PVN) and brainstem dorsal vagal complex (DVC) in oxytocin and catecholaminergic neurons (at protein level). Highest expression detected in subcutaneous and epididymal white adipose tissue, brown adipose tissue and testis. Also expressed in brain, skeletal muscle and adrenal gland, with lower levels detected in liver, heart, kidney, spleen, lung and small intestine. In brain, detected in piriform cortex, olfactory tubercle, islands of Calleja, lateral septal nucleus, medial septal nucleus, nucleus of the vertical limb of the diagonal band, nucleus of the horizontal limb of the diagonal band, preoptic area, paraventricular thalamic nucleus, lateral globus pallidus, supraoptic nucleus, suprachiasmatic nucleus, subfornical organ, paraventricular nucleus of the hypothalamus, zona incerta, dorsomedial nucleus of the hypothalamus, ventromedial nucleus of the hypothalamus, arcuate nucleus of the hypothalamus, basomedial amygdaloid nucleus, medial amygdaloid nucleus, medial habenular, pyramidal cell layer of the hippocampus, granular layer of the dentate gyrus, posterior hypothalamus, supramammilliary nucleus, premammillary nucleus, nucleus of Darkschewitsch, Edinger-Westphal nucleus, ventral tegmental area, dorsal raphe nucleus, periaqueductal gray, median raphe nucleus, lateral parabrachial nucleus, dorsal tegmental nucleus, laterodorsal tegmental nucleus, locus coeruleus, Barrington's nucleus, medial vestibular nucleus, ambiguous nucleus, dorsal vagal complex and hypoglossal nucleus.

Its subcellular location is the endoplasmic reticulum membrane. It localises to the lipid droplet. Plays a crucial role in the formation of lipid droplets (LDs) which are storage organelles at the center of lipid and energy homeostasis. In association with LDAF1, defines the sites of LD formation in the ER. Also required for growth and maturation of small nascent LDs into larger mature LDs. Mediates the formation and/or stabilization of endoplasmic reticulum-lipid droplets (ER-LD) contacts, facilitating protein and lipid delivery from the ER into growing LDs. Regulates the maturation of ZFYVE1-positive nascent LDs and the function of the RAB18-ZFYVE1 complex in mediating the formation of ER-LD contacts. Binds anionic phospholipids including phosphatidic acid. Plays an important role in the differentiation and development of adipocytes. This is Seipin from Mus musculus (Mouse).